The primary structure comprises 673 residues: UvrABC system protein B (673 aa).

Residues 26–183 form the Helicase ATP-binding domain; that stretch reads EGLEDGLAHQ…RRLAELQYAR (158 aa). 39–46 lines the ATP pocket; that stretch reads GVTGSGKT. The Beta-hairpin motif lies at 92-115; it reads YYDYYQPEAYVPSSDTFIEKDASV. A Helicase C-terminal domain is found at 431–597; sequence QVDDLLSEIR…GLNKKVVDIL (167 aa). The tract at residues 608–627 is disordered; it reads AKGRGKSRPIVEPDNVPMDM. In terms of domain architecture, UVR spans 633–668; it reads QQKIHELEGLMMQHAQNLEFEEAAQIRDQLHQLRDL.

This sequence belongs to the UvrB family. Forms a heterotetramer with UvrA during the search for lesions. Interacts with UvrC in an incision complex.

The protein localises to the cytoplasm. The UvrABC repair system catalyzes the recognition and processing of DNA lesions. A damage recognition complex composed of 2 UvrA and 2 UvrB subunits scans DNA for abnormalities. Upon binding of the UvrA(2)B(2) complex to a putative damaged site, the DNA wraps around one UvrB monomer. DNA wrap is dependent on ATP binding by UvrB and probably causes local melting of the DNA helix, facilitating insertion of UvrB beta-hairpin between the DNA strands. Then UvrB probes one DNA strand for the presence of a lesion. If a lesion is found the UvrA subunits dissociate and the UvrB-DNA preincision complex is formed. This complex is subsequently bound by UvrC and the second UvrB is released. If no lesion is found, the DNA wraps around the other UvrB subunit that will check the other stand for damage. The sequence is that of UvrABC system protein B from Escherichia coli O7:K1 (strain IAI39 / ExPEC).